The primary structure comprises 214 residues: Probable GTP-binding protein EngB (214 aa).

The EngB-type G domain maps to 22-194 (NLPEIAFAGR…WARIDALLSP (173 aa)). GTP-binding positions include 30–37 (GRSNVGKS), 57–61 (GRTQL), 75–78 (DLPG), 142–145 (TKCD), and 173–175 (FSA). Mg(2+)-binding residues include S37 and T59.

It belongs to the TRAFAC class TrmE-Era-EngA-EngB-Septin-like GTPase superfamily. EngB GTPase family. Mg(2+) is required as a cofactor.

Necessary for normal cell division and for the maintenance of normal septation. The sequence is that of Probable GTP-binding protein EngB from Citrifermentans bemidjiense (strain ATCC BAA-1014 / DSM 16622 / JCM 12645 / Bem) (Geobacter bemidjiensis).